A 129-amino-acid polypeptide reads, in one-letter code: Phosphoribosyl-AMP cyclohydrolase (129 aa).

Asp-84 contributes to the Mg(2+) binding site. Position 85 (Cys-85) interacts with Zn(2+). Positions 86 and 88 each coordinate Mg(2+). Zn(2+) is bound by residues Cys-101 and Cys-108.

Belongs to the PRA-CH family. As to quaternary structure, homodimer. It depends on Mg(2+) as a cofactor. Zn(2+) serves as cofactor.

It localises to the cytoplasm. It carries out the reaction 1-(5-phospho-beta-D-ribosyl)-5'-AMP + H2O = 1-(5-phospho-beta-D-ribosyl)-5-[(5-phospho-beta-D-ribosylamino)methylideneamino]imidazole-4-carboxamide. It participates in amino-acid biosynthesis; L-histidine biosynthesis; L-histidine from 5-phospho-alpha-D-ribose 1-diphosphate: step 3/9. In terms of biological role, catalyzes the hydrolysis of the adenine ring of phosphoribosyl-AMP. This is Phosphoribosyl-AMP cyclohydrolase from Halobacterium salinarum (strain ATCC 700922 / JCM 11081 / NRC-1) (Halobacterium halobium).